Consider the following 581-residue polypeptide: ATP-dependent lipid A-core flippase (581 aa).

The next 6 helical transmembrane spans lie at 21-41, 65-85, 138-158, 161-181, 246-266, and 271-291; these read TVAIVAIIGMIGYSGMDALFI, FVVIALVIGRGVFNFMSSYCL, ALLIVVREGAFVVFLLAVMFY, WQLSLIFLVIIPLVAVIVTVV, LSVSIIQVLAASAMAVILWVV, and MIDTISSGDFVVLISSMMMLL. Positions 24–306 constitute an ABC transmembrane type-1 domain; that stretch reads IVAIIGMIGY…LANVNSDMQR (283 aa). The ABC transporter domain maps to 338–575; the sequence is IEVKNVTFKY…NGTYSALCKM (238 aa). 372 to 379 is an ATP binding site; that stretch reads GRSGSGKS.

The protein belongs to the ABC transporter superfamily. Lipid exporter (TC 3.A.1.106) family. As to quaternary structure, homodimer.

It is found in the cell inner membrane. The catalysed reaction is ATP + H2O + lipid A-core oligosaccharideSide 1 = ADP + phosphate + lipid A-core oligosaccharideSide 2.. Its function is as follows. Involved in lipopolysaccharide (LPS) biosynthesis. Translocates lipid A-core from the inner to the outer leaflet of the inner membrane. Transmembrane domains (TMD) form a pore in the inner membrane and the ATP-binding domain (NBD) is responsible for energy generation. This chain is ATP-dependent lipid A-core flippase, found in Pseudoalteromonas translucida (strain TAC 125).